A 266-amino-acid polypeptide reads, in one-letter code: Dolichol-phosphate mannosyltransferase subunit 1 (266 aa).

The segment covering 1–19 (MASPGASRGASAATAAAAS) has biased composition (low complexity). The segment at 1-31 (MASPGASRGASAATAAAASPRPPQGRSSRRD) is disordered. The residue at position 2 (A2) is an N-acetylalanine. At S3 the chain carries Phosphoserine. 11 residues coordinate GDP-alpha-D-mannose: P38, Y40, E42, I69, D71, D124, A125, D126, R153, R240, and K246. Residue D126 coordinates Mg(2+). Residue D126 coordinates Mn(2+).

It belongs to the glycosyltransferase 2 family. Component of the dolichol-phosphate mannose (DPM) synthase complex composed of DPM1, DPM2 and DPM3; within the complex, directly interacts with DPM3. This interaction may stabilize DPM1. Mg(2+) is required as a cofactor. The cofactor is Mn(2+). It depends on Ca(2+) as a cofactor.

It is found in the endoplasmic reticulum. It catalyses the reaction a di-trans,poly-cis-dolichyl phosphate + GDP-alpha-D-mannose = a di-trans,poly-cis-dolichyl beta-D-mannosyl phosphate + GDP. Its pathway is protein modification; protein glycosylation. In terms of biological role, transfers mannose from GDP-mannose to dolichol monophosphate to form dolichol phosphate mannose (Dol-P-Man) which is the mannosyl donor in pathways leading to N-glycosylation, glycosyl phosphatidylinositol membrane anchoring, and O-mannosylation of proteins; catalytic subunit of the dolichol-phosphate mannose (DPM) synthase complex. The chain is Dolichol-phosphate mannosyltransferase subunit 1 (DPM1) from Cricetulus griseus (Chinese hamster).